A 353-amino-acid chain; its full sequence is Photosystem II protein D1 (353 aa).

Threonine 2 is subject to N-acetylthreonine. Threonine 2 carries the post-translational modification Phosphothreonine. The next 3 membrane-spanning stretches (helical) occupy residues 29–46 (YIGW…TATS), 118–133 (HFLL…EWEL), and 142–156 (WIAV…AATA). A chlorophyll a-binding site is contributed by histidine 118. Residue tyrosine 126 coordinates pheophytin a. Residues aspartate 170 and glutamate 189 each contribute to the [CaMn4O5] cluster site. A helical transmembrane segment spans residues 197 to 218 (FHMLGVAGVFGGSLFSAMHGSL). Residue histidine 198 coordinates chlorophyll a. A quinone is bound by residues histidine 215 and 264–265 (SF). Histidine 215 contributes to the Fe cation binding site. Position 272 (histidine 272) interacts with Fe cation. Residues 274–288 (FLAAWPVVGIWFTAL) form a helical membrane-spanning segment. The [CaMn4O5] cluster site is built by histidine 332, glutamate 333, aspartate 342, and alanine 344. A propeptide spanning residues 345–353 (AVEAPSING) is cleaved from the precursor.

This sequence belongs to the reaction center PufL/M/PsbA/D family. In terms of assembly, PSII is composed of 1 copy each of membrane proteins PsbA, PsbB, PsbC, PsbD, PsbE, PsbF, PsbH, PsbI, PsbJ, PsbK, PsbL, PsbM, PsbT, PsbX, PsbY, PsbZ, Psb30/Ycf12, at least 3 peripheral proteins of the oxygen-evolving complex and a large number of cofactors. It forms dimeric complexes. The D1/D2 heterodimer binds P680, chlorophylls that are the primary electron donor of PSII, and subsequent electron acceptors. It shares a non-heme iron and each subunit binds pheophytin, quinone, additional chlorophylls, carotenoids and lipids. D1 provides most of the ligands for the Mn4-Ca-O5 cluster of the oxygen-evolving complex (OEC). There is also a Cl(-1) ion associated with D1 and D2, which is required for oxygen evolution. The PSII complex binds additional chlorophylls, carotenoids and specific lipids. serves as cofactor. In terms of processing, tyr-161 forms a radical intermediate that is referred to as redox-active TyrZ, YZ or Y-Z. Post-translationally, C-terminally processed by CTPA; processing is essential to allow assembly of the oxygen-evolving complex and thus photosynthetic growth.

The protein resides in the plastid. It localises to the chloroplast thylakoid membrane. It catalyses the reaction 2 a plastoquinone + 4 hnu + 2 H2O = 2 a plastoquinol + O2. In terms of biological role, this is one of the two reaction center proteins of photosystem II. Its function is as follows. Photosystem II (PSII) is a light-driven water:plastoquinone oxidoreductase that uses light energy to abstract electrons from H(2)O, generating O(2) and a proton gradient subsequently used for ATP formation. It consists of a core antenna complex that captures photons, and an electron transfer chain that converts photonic excitation into a charge separation. The D1/D2 (PsbA/PsbD) reaction center heterodimer binds P680, the primary electron donor of PSII as well as several subsequent electron acceptors. The protein is Photosystem II protein D1 of Pisum sativum (Garden pea).